A 762-amino-acid chain; its full sequence is Homeobox-leucine zipper protein MERISTEM L1 (762 aa).

Positions 13-72 (MFDMTPKNSENDLGITGSHEEDFETKSGAEVTMENPLEEELQDPNQRPNKKKRYHRHTQR) are disordered. Residues 30–39 (SHEEDFETKS) show a composition bias toward basic and acidic residues. Basic residues predominate over residues 60–71 (PNKKKRYHRHTQ). The homeobox DNA-binding region spans 62-121 (KKKRYHRHTQRQIQELESFFKECPHPDDKQRKELSRELSLEPLQVKFWFQNKRTQMKAQH). Residues 110 to 192 (FQNKRTQMKA…DRISAIAAKY (83 aa)) adopt a coiled-coil conformation. The START domain occupies 253–484 (SEADKPMIVE…LDRQCERLAS (232 aa)).

The protein belongs to the HD-ZIP homeobox family. Class IV subfamily. As to quaternary structure, interacts with GAI/RGA2, RGA/RGA1/GRS, RGL2/SCL19 and PDF2. Interacts with AIL7/PLT7, ANT, BBM and AIL1.

The protein localises to the nucleus. In terms of biological role, probable transcription factor involved in cell specification and pattern formation during embryogenesis. Binds to the L1 box DNA sequence 5'-TAAATG[CT]A-3'. Plays a role in maintaining the identity of L1 cells, possibly by interacting with their L1 box or other target-gene promoters; binds to the LIP1 gene promoter and stimulates its expression upon imbibition. Acts as a positive regulator of gibberellins (GAs)-regulated epidermal gene expression (e.g. LIP1, LIP2, LTP1, FDH and PDF1). Functionally redundant to PDF2. Seems to promote cell differentiation. The polypeptide is Homeobox-leucine zipper protein MERISTEM L1 (Arabidopsis thaliana (Mouse-ear cress)).